Here is a 101-residue protein sequence, read N- to C-terminus: AFA-III adhesin operon regulatory protein (101 aa).

Regulates the transcription of genes involved in the biosynthesis of afimbrial adhesin-III. The chain is AFA-III adhesin operon regulatory protein (afaA) from Escherichia coli.